Reading from the N-terminus, the 108-residue chain is Class I hydrophobin 3 (108 aa).

Positions 1 to 17 (MFFQTTIVAALASLAVA) are cleaved as a signal peptide. 4 cysteine pairs are disulfide-bonded: Cys-28–Cys-87, Cys-35–Cys-81, Cys-36–Cys-69, and Cys-88–Cys-101. Asn-37 carries N-linked (GlcNAc...) asparagine glycosylation.

It belongs to the fungal hydrophobin family. Self-assembles to form functional amyloid fibrils called rodlets. Self-assembly into fibrillar rodlets occurs spontaneously at hydrophobic:hydrophilic interfaces and the rodlets further associate laterally to form amphipathic monolayers.

It is found in the secreted. The protein resides in the cell wall. Functionally, aerial growth, conidiation, and dispersal of filamentous fungi in the environment rely upon a capability of their secreting small amphipathic proteins called hydrophobins (HPBs) with low sequence identity. Class I can self-assemble into an outermost layer of rodlet bundles on aerial cell surfaces, conferring cellular hydrophobicity that supports fungal growth, development and dispersal; whereas Class II form highly ordered films at water-air interfaces through intermolecular interactions but contribute nothing to the rodlet structure. Vmh3 is a class I hydrophobin that is essential for the maintenance of the surface hydrophobicity of the mycelium and might be involved in the development of fruiting bodies. Plays an important role in hyphal resistance against environmental stress. Necessary for the efficient biodegradation of lignin. This Pleurotus ostreatus (strain PC15) (Oyster mushroom) protein is Class I hydrophobin 3.